The chain runs to 538 residues: MMPERFSFDFRPIDQYWTRAKGACSNTKRGNMYILASLALILLHLLVLPIYLYLTWHHKYWRKRGLVTARPLTLLGTYPGLLTRKSNLVFDVQKIYDKYKGKHRAVGVFVTRQPQILVLDPELAHEVLVSNFRCYKDSLQSSYLRHAKWDKYARLNPFWASGQSWRRLRTDAQAGISGSRLRQAYNIWEQGGQMLTEYMTQQVAEKNNILETRDLCFRYTAHVMADFIWGIDAGTLTRPMEQPNKVQEMASKWTSYAFYMLTLFMATIVAPCSRLLLRFRFYPKETDEFFSNLTKESIELRLKAGDSTRTDYLSHLLQLRDQKQATHDDLVGHALTVMLDGYDTSGTALLHALYYLAENPAVQQKLRVEILSCMASEKSLDFEKLSSLQYLEQVIYESLRLSSLIPQYTKVCTLPTVIRLSESKSLDVEVGMTIMIPNYQFHHDKQYFPEPEAFKPERFDNGAYQELMRKGIFLPFSDGPRICMGVPLAMLTLKSALVHILSNFQVVRGRDRLIPKGDSGFGVVLQGDVNLEYRRFFR.

C483 lines the heme pocket.

Belongs to the cytochrome P450 family. Heme is required as a cofactor.

The protein localises to the endoplasmic reticulum membrane. The protein resides in the microsome membrane. May be involved in the metabolism of insect hormones and in the breakdown of synthetic insecticides. This Drosophila melanogaster (Fruit fly) protein is Probable cytochrome P450 309a2 (Cyp309a2).